We begin with the raw amino-acid sequence, 131 residues long: Small ribosomal subunit protein uS11 (131 aa).

This sequence belongs to the universal ribosomal protein uS11 family. Part of the 30S ribosomal subunit. Interacts with proteins S7 and S18. Binds to IF-3.

Its function is as follows. Located on the platform of the 30S subunit, it bridges several disparate RNA helices of the 16S rRNA. Forms part of the Shine-Dalgarno cleft in the 70S ribosome. This chain is Small ribosomal subunit protein uS11, found in Cellvibrio japonicus (strain Ueda107) (Pseudomonas fluorescens subsp. cellulosa).